The primary structure comprises 1854 residues: Dystrophin, isoform D (1854 aa).

Disordered regions lie at residues 1–65 (MTTT…PIYA), 84–161 (GSTT…YEMP), 240–352 (QSPT…MSPA), 516–548 (LKPT…PTPS), 595–650 (TPGG…TSES), 716–740 (VMSK…PSTA), 783–830 (LKLQ…STTP), and 1012–1036 (VSDT…EQSR). Composition is skewed to low complexity over residues 11 to 37 (QRQQ…QQHQ) and 84 to 96 (GSTT…LQSS). A compositionally biased stretch (polar residues) spans 143-157 (GLSSAQPATSASSGN). Over residues 276-296 (QQQQQQQQAGINGQINGNGNQ) the composition is skewed to low complexity. Polar residues-rich tracts occupy residues 331-345 (TLSR…SSAD) and 518-536 (PTST…SNTA). The span at 595 to 606 (TPGGGVVGGQAA) shows a compositional bias: gly residues. A compositionally biased stretch (polar residues) spans 716-727 (VMSKSNSSLGSV). 2 stretches are compositionally biased toward low complexity: residues 728-740 (TTPS…PSTA) and 783-814 (LKLQ…QQIQ). Polar residues predominate over residues 815–830 (NGFASDDNSSSCSTTP). Spectrin repeat units lie at residues 936 to 1069 (EHWN…RLDE) and 1072 to 1176 (TKMR…VLCQ). Residues 1179-1209 (AQQTHENGDDGRTTSNSGTIGPLPNLGQSVK) form a disordered region. Positions 1206-1239 (QSVKPPWERATTAANVPYYIDHERETTHWDHPEM) constitute a WW domain. Residues 1464 to 1520 (KHQAKCNICKEYPIVGFRYRCLKCFNFDMCQKCFFFGRNAKNHKLTHPMHEYCTTTT) form a ZZ-type zinc finger. Zn(2+)-binding residues include Cys-1469, Cys-1472, Cys-1484, Cys-1487, Cys-1493, Cys-1496, His-1506, and His-1510. At Ser-1564 the chain carries Phosphoserine. Disordered stretches follow at residues 1673-1701 (EQSG…GEQG) and 1744-1854 (DEPN…ELQK). Polar residues-rich tracts occupy residues 1682–1694 (NGMQ…MTGL) and 1765–1796 (ALNS…QQNG). Residues 1815 to 1826 (QELESINDDLED) are compositionally biased toward acidic residues. Residues 1827–1845 (SSSSNTTNTTTTTTTTATT) show a composition bias toward low complexity.

As to quaternary structure, component of the dystrophin associated protein complex (DAPC). Interacts with Dg, via the Dg WW domain binding sites. As to expression, during embryogenesis and in third instar larvae, expression is seen in pericardial cells of the dorsal vessel and in the ventral nerve cord. Expression is absent from both the embryonic and larval musculature.

It localises to the cell membrane. It is found in the sarcolemma. The protein localises to the cytoplasm. Its subcellular location is the cytoskeleton. In terms of biological role, required for the maintenance of appropriate synaptic retrograde communication and the stabilization of muscle cell architecture or physiology. May play a role in anchoring the cytoskeleton to the plasma membrane. The sequence is that of Dystrophin, isoform D (Dys) from Drosophila melanogaster (Fruit fly).